The primary structure comprises 764 residues: MPMTTIAPEQVNRIVWNQHHDPFEILGSHPIEQNGKNVWVVRAYLPNASAAWVVLPEQRQEYAMQTVHDPHFFECIIETSELSNYQLKTKEGEHERVSYDPYAFRSPRLTDFDLHLFAEGNHHRIYEKLGAHFTEVDGVTGVYFAVWAPNARNVSVLGDFNLWDGRKHQMRKGATGVWELFIPEIGVGEHYKYEIKNFAGHIYEKSDPFGFQQEPRPKTASIVSNLNSYNWSDENWLEQRRHTDPLTQPISVYEVHLGSWLHAASAEPAKLPNGETEPVVIASELNPGARFLTYRELASRLIPYVKELGYTHIELLPIAEHPFDGSWGYQVTGYYAPTSRFGTPEDFMYFVDQCHQNNIGVIVDWVPGHFPKDGHGLAFFDGTHLYEHADSRKGEHKEWGTLVFNYSRNEVRNFLVANALFWFDKYHIDGIRVDAVASMLYLDYCRKEGEWLPNQYGGRENLEAADFLRQVNHLLFSYFPGVLSIAEESTDWPMVSWPTYTGGLGFNLKWNMGWMHDMLDYFSMDPWFRQFHQNNVTFSMWYNHSENFMLALSHDEVVHGKSNIIGKMPGDKWQKLANVRCLFAYMFAHPGKKTMFMSMEFGQWSEWNVWADLEWPLLQFEPHQQLKKFFTELNKLYRSEPALYTLDFAREGFDWIDCSDNRHSVVSFIRREKDTENFVVVVCNFTPQPHSHYRIGVPEKGFYTELFNSDARQYGGSNMGNLGGKWTDDWSMHSRPYSLDLCLPPLGVLILKMDKEKTAKASGS.

Asp-434 acts as the Nucleophile in catalysis. Glu-487 acts as the Proton donor in catalysis.

The protein belongs to the glycosyl hydrolase 13 family. GlgB subfamily. Monomer.

It carries out the reaction Transfers a segment of a (1-&gt;4)-alpha-D-glucan chain to a primary hydroxy group in a similar glucan chain.. It participates in glycan biosynthesis; glycogen biosynthesis. Functionally, catalyzes the formation of the alpha-1,6-glucosidic linkages in glycogen by scission of a 1,4-alpha-linked oligosaccharide from growing alpha-1,4-glucan chains and the subsequent attachment of the oligosaccharide to the alpha-1,6 position. The sequence is that of 1,4-alpha-glucan branching enzyme GlgB from Trichormus variabilis (strain ATCC 29413 / PCC 7937) (Anabaena variabilis).